The sequence spans 297 residues: Large ribosomal subunit protein uL15m (297 aa).

Residues 1–21 constitute a mitochondrion transit peptide; that stretch reads MSGNGVHGVHGALQLLRSLPK. Residues 23-69 are disordered; it reads SLANLRPNPGSKKPERRRGRGRYRGRKCGRGHKGERQRGNRPRLGFE. Residues 36-53 are compositionally biased toward basic residues; that stretch reads PERRRGRGRYRGRKCGRG.

The protein belongs to the universal ribosomal protein uL15 family. In terms of assembly, component of the mitochondrial ribosome large subunit (39S) which comprises a 16S rRNA and about 50 distinct proteins.

It is found in the mitochondrion. The sequence is that of Large ribosomal subunit protein uL15m (MRPL15) from Gallus gallus (Chicken).